Reading from the N-terminus, the 386-residue chain is Zinc finger protein 385A (386 aa).

The Matrin-type 1 zinc finger occupies 74-98; the sequence is ISCNICQIRFNSQSQAEAHYKGNRH. The tract at residues 90 to 193 is disordered; the sequence is EAHYKGNRHA…ASLPGGSKEE (104 aa). The span at 103–121 shows a compositional bias: basic and acidic residues; it reads KGIEAAKTRGREPGVREPG. The necessary for binding to ITPR1, CEBPA and p53/TP53 mRNAs stretch occupies residues 145 to 351; the sequence is NGLGPAPGSP…AGSPLSLRPA (207 aa). A Phosphoserine modification is found at serine 185. The Matrin-type 2 zinc finger occupies 201–225; sequence LYCALCKVAVNSLSQLEAHNKGTKH. A Phosphothreonine modification is found at threonine 248. A Matrin-type 3 zinc finger spans residues 261 to 285; the sequence is FHCEICNVKVNSEVQLKQHISSRRH. A disordered region spans residues 279 to 309; that stretch reads HISSRRHRDGVAGKPNPLLSRHKKSRGAGEL.

Interacts with ELAVL1; the interaction is indirect, mRNA-dependent and may regulate p53/TP53 expression. Interacts with p53/TP53; the interaction is direct and enhances p53/TP53 transactivation functions on cell-cycle arrest target genes, resulting in growth arrest. Ubiquitinated upon prolonged exposure to genotoxic stress, which leads to proteasomal degradation of ZNF385A and releases p53/TP53 from cell-cycle arrest target gene promoters. As to expression, expressed predominantly in the retina.

It is found in the cytoplasm. It localises to the nucleus. The protein localises to the nucleolus. Its subcellular location is the cell projection. The protein resides in the dendrite. RNA-binding protein that affects the localization and the translation of a subset of mRNA. May play a role in adipogenesis through binding to the 3'-UTR of CEBPA mRNA and regulation of its translation. Targets ITPR1 mRNA to dendrites in Purkinje cells, and may regulate its activity-dependent translation. With ELAVL1, binds the 3'-UTR of p53/TP53 mRNAs to control their nuclear export induced by CDKN2A. Hence, may regulate p53/TP53 expression and mediate in part the CDKN2A anti-proliferative activity. May also bind CCNB1 mRNA. Alternatively, may also regulate p53/TP53 activity through direct protein-protein interaction. Interacts with p53/TP53 and promotes cell-cycle arrest over apoptosis enhancing preferentially the DNA binding and transactivation of p53/TP53 on cell-cycle arrest target genes over proapoptotic target genes. May also regulate the ubiquitination and stability of CDKN1A promoting DNA damage-induced cell cycle arrest. Also plays a role in megakaryocytes differentiation. The chain is Zinc finger protein 385A (ZNF385A) from Homo sapiens (Human).